The primary structure comprises 103 residues: Small ribosomal subunit protein uS10 (103 aa).

It belongs to the universal ribosomal protein uS10 family. Part of the 30S ribosomal subunit.

In terms of biological role, involved in the binding of tRNA to the ribosomes. The chain is Small ribosomal subunit protein uS10 from Colwellia psychrerythraea (strain 34H / ATCC BAA-681) (Vibrio psychroerythus).